The following is a 652-amino-acid chain: MLDPLRASSPATLALMSSLPLPLDHGHLQKLVTADLVRPDHLLGAHPVTENGVEGVRFAVWAPRAQHVSVVGDFNGWNGFDHPMQRLDFGFWGAFVPSARPGQRYKFRVTGADGRTVDKMDPYGAFTEVRPNTASIIWPLAFEWTDDAWMQKRTPGFDRPISIYEVHVGSWARRDDGWFLNYRELAHRLADYVTFMGYTHVELLGVMEHPFDGSWGYQVTGYYAPTSRLGAPEDFAYLVNHLHERGIGVIVDWVPGHFPTDEAGLAHFDGAPLYEYSDPRKGYHYDWNTYIFDYGRNEVMMFLIGSALKWLQDFHVDGLRVDAVASMLYLDFSRTEWVPNIHGGRENLEAIAFLKRLNEVVHHMAPGCMMIAEESTAFPGVTSPTPFGLGFDYKWAMGWMNDTLYYFEQDPLWRKYHHHKLTFFNVYRTGENYILAISHDEVVHLKKAMVSKMPGDWYMQRAGYRAFLAMMWTTPGKKLLFMGQEFAQGTEWNHDEALPWDVTDLPEHRGVMNLVRRLNGLYRERPDLHIGDTWEEGQLWVSADDTDNSVYAYIRRDPRPQAEGGGAWSLAVANLTPVYREGYPIGVPQGGEYRVLLSTDDGEYGGFGTQQPDLTAKEEGWNGQTHHLRLNLPPMSVLLLEHVGVTPRSEDR.

Residue Asp322 is the Nucleophile of the active site. Glu373 serves as the catalytic Proton donor.

It belongs to the glycosyl hydrolase 13 family. GlgB subfamily. Monomer.

It catalyses the reaction Transfers a segment of a (1-&gt;4)-alpha-D-glucan chain to a primary hydroxy group in a similar glucan chain.. It participates in glycan biosynthesis; glycogen biosynthesis. Its function is as follows. Catalyzes the formation of the alpha-1,6-glucosidic linkages in glycogen by scission of a 1,4-alpha-linked oligosaccharide from growing alpha-1,4-glucan chains and the subsequent attachment of the oligosaccharide to the alpha-1,6 position. This Deinococcus geothermalis (strain DSM 11300 / CIP 105573 / AG-3a) protein is 1,4-alpha-glucan branching enzyme GlgB.